We begin with the raw amino-acid sequence, 821 residues long: Protein SCAR1 (821 aa).

Disordered stretches follow at residues 168–189, 205–289, and 577–625; these read KRAS…QRGR, TCTS…RGSS, and TSLP…RESK. The span at 206–225 shows a compositional bias: polar residues; it reads CTSLSFSGRTSTSKTASTIE. The segment covering 226–250 has biased composition (basic and acidic residues); the sequence is IESKSDLQEHRSFSFDSRSGGEKPK. Over residues 252–265 the composition is skewed to polar residues; the sequence is VSSSSRFTPGSRTI. Over residues 592–612 the composition is skewed to low complexity; it reads SSSYISDNSDNDNRSVSMSEQ. The WH2 domain maps to 756–774; it reads EAGDFLHQIRTKQFNLRRV. Positions 802–821 are disordered; it reads QAVASDDGEGESDTWSDSDT. Residues 807–821 show a composition bias toward acidic residues; sequence DDGEGESDTWSDSDT.

Belongs to the SCAR/WAVE family. As to quaternary structure, binds BRK1 and actin. Interacts with SPK1, ABI1 and ABI2. In terms of tissue distribution, expressed in expanding cotyledons, expanding leaves and expanding siliques containing developing embryos. Detected in unopened flower buds and in the expanding tip region of roots. Reduced expression in mature leaves and mature cotyledons.

The protein resides in the cytoplasm. Its subcellular location is the cytoskeleton. Functionally, involved in regulation of actin and microtubule organization. Part of a WAVE complex that activates the Arp2/3 complex. Regulates trichome branch positioning and expansion. This chain is Protein SCAR1 (SCAR1), found in Arabidopsis thaliana (Mouse-ear cress).